The following is a 664-amino-acid chain: NADH-ubiquinone oxidoreductase chain 5 (664 aa).

A run of 17 helical transmembrane segments spans residues 2 to 22, 28 to 48, 77 to 97, 120 to 140, 168 to 188, 210 to 230, 250 to 270, 285 to 305, 321 to 341, 342 to 362, 376 to 396, 424 to 444, 462 to 482, 521 to 541, 590 to 610, 614 to 634, and 639 to 659; these read LLLT…LFGF, GSVF…LIII, FLFD…STLV, LFTF…MFVG, AMLV…TIFY, FIFF…IFIG, GPTP…GVYL, LKII…VGLV, LGYM…FHLS, NHAY…HAMG, ILPF…GFPF, LGTI…FFAF, PLEM…IGYI, LPVI…FFKF, IDKG…FSFL, IILL…ISTI, and IIFF…FLFI.

This sequence belongs to the complex I subunit 5 family.

The protein localises to the mitochondrion inner membrane. It catalyses the reaction a ubiquinone + NADH + 5 H(+)(in) = a ubiquinol + NAD(+) + 4 H(+)(out). In terms of biological role, core subunit of the mitochondrial membrane respiratory chain NADH dehydrogenase (Complex I) that is believed to belong to the minimal assembly required for catalysis. Complex I functions in the transfer of electrons from NADH to the respiratory chain. The immediate electron acceptor for the enzyme is believed to be ubiquinone. The chain is NADH-ubiquinone oxidoreductase chain 5 (ND5) from Phytophthora infestans (Potato late blight agent).